A 527-amino-acid chain; its full sequence is Bifunctional purine biosynthesis protein PurH (527 aa).

Residues 8–156 (AGAKRPIRRA…KNHPSVAVVV (149 aa)) enclose the MGS-like domain.

The protein belongs to the PurH family.

It catalyses the reaction (6R)-10-formyltetrahydrofolate + 5-amino-1-(5-phospho-beta-D-ribosyl)imidazole-4-carboxamide = 5-formamido-1-(5-phospho-D-ribosyl)imidazole-4-carboxamide + (6S)-5,6,7,8-tetrahydrofolate. It carries out the reaction IMP + H2O = 5-formamido-1-(5-phospho-D-ribosyl)imidazole-4-carboxamide. The protein operates within purine metabolism; IMP biosynthesis via de novo pathway; 5-formamido-1-(5-phospho-D-ribosyl)imidazole-4-carboxamide from 5-amino-1-(5-phospho-D-ribosyl)imidazole-4-carboxamide (10-formyl THF route): step 1/1. It participates in purine metabolism; IMP biosynthesis via de novo pathway; IMP from 5-formamido-1-(5-phospho-D-ribosyl)imidazole-4-carboxamide: step 1/1. The chain is Bifunctional purine biosynthesis protein PurH from Mycobacterium sp. (strain JLS).